The chain runs to 425 residues: Serine--tRNA ligase (425 aa).

230–232 (TAE) is a binding site for L-serine. 261–263 (RSE) contacts ATP. Glu-284 contributes to the L-serine binding site. 348–351 (EISS) is an ATP binding site. Ser-384 contributes to the L-serine binding site.

The protein belongs to the class-II aminoacyl-tRNA synthetase family. Type-1 seryl-tRNA synthetase subfamily. In terms of assembly, homodimer. The tRNA molecule binds across the dimer.

Its subcellular location is the cytoplasm. It carries out the reaction tRNA(Ser) + L-serine + ATP = L-seryl-tRNA(Ser) + AMP + diphosphate + H(+). The catalysed reaction is tRNA(Sec) + L-serine + ATP = L-seryl-tRNA(Sec) + AMP + diphosphate + H(+). It participates in aminoacyl-tRNA biosynthesis; selenocysteinyl-tRNA(Sec) biosynthesis; L-seryl-tRNA(Sec) from L-serine and tRNA(Sec): step 1/1. Its function is as follows. Catalyzes the attachment of serine to tRNA(Ser). Is also able to aminoacylate tRNA(Sec) with serine, to form the misacylated tRNA L-seryl-tRNA(Sec), which will be further converted into selenocysteinyl-tRNA(Sec). This Streptococcus pyogenes serotype M4 (strain MGAS10750) protein is Serine--tRNA ligase.